Here is a 376-residue protein sequence, read N- to C-terminus: 23S rRNA (uracil(747)-C(5))-methyltransferase RlmC (376 aa).

[4Fe-4S] cluster-binding residues include Cys3, Cys11, Cys14, and Cys87. S-adenosyl-L-methionine contacts are provided by Gln212, Phe241, Glu262, and Asn307. Cys334 functions as the Nucleophile in the catalytic mechanism.

It belongs to the class I-like SAM-binding methyltransferase superfamily. RNA M5U methyltransferase family. RlmC subfamily.

The catalysed reaction is uridine(747) in 23S rRNA + S-adenosyl-L-methionine = 5-methyluridine(747) in 23S rRNA + S-adenosyl-L-homocysteine + H(+). Catalyzes the formation of 5-methyl-uridine at position 747 (m5U747) in 23S rRNA. The chain is 23S rRNA (uracil(747)-C(5))-methyltransferase RlmC from Salmonella typhimurium (strain LT2 / SGSC1412 / ATCC 700720).